Here is a 259-residue protein sequence, read N- to C-terminus: MMLGVIGGSGFYTFFGSDARAVSVETPYGPPSAPITVGTVGDHEVAFLPRHGVKHEFSPHTVPYRANLWALRSLGVRRVFAPCAVGSLTPDLGPGSIVVPDQLVDRTSGRDDTYFDSGGIHVAFADPYCPTLRAAATGLPGVVDGGTMVVIQGPRFSTRAESRWFASQGFTLVNMTGYPEAVLARELEMCYAAVALVTDLDAGIEVGSGVRAVDVFAEFERNMPPFKKLVFEALEAVEVERTCTHCLTHSGVQLPFELP.

Residues Ser-9 and 50–51 each bind phosphate; that span reads RH. Substrate is bound at residue Met-175. Thr-176 provides a ligand contact to phosphate. A substrate-binding site is contributed by 199–201; that stretch reads DLD.

This sequence belongs to the PNP/MTAP phosphorylase family. MTAP subfamily. In terms of assembly, homohexamer. Dimer of a homotrimer.

The catalysed reaction is S-methyl-5'-thioadenosine + phosphate = 5-(methylsulfanyl)-alpha-D-ribose 1-phosphate + adenine. The protein operates within amino-acid biosynthesis; L-methionine biosynthesis via salvage pathway; S-methyl-5-thio-alpha-D-ribose 1-phosphate from S-methyl-5'-thioadenosine (phosphorylase route): step 1/1. Its function is as follows. Catalyzes the reversible phosphorylation of S-methyl-5'-thioadenosine (MTA) to adenine and 5-methylthioribose-1-phosphate. Involved in the breakdown of MTA, a major by-product of polyamine biosynthesis. Responsible for the first step in the methionine salvage pathway after MTA has been generated from S-adenosylmethionine. Has broad substrate specificity with 6-aminopurine nucleosides as preferred substrates. The sequence is that of S-methyl-5'-thioadenosine phosphorylase from Mycolicibacterium smegmatis (strain ATCC 700084 / mc(2)155) (Mycobacterium smegmatis).